The chain runs to 775 residues: Coiled-coil domain-containing protein 33 (775 aa).

Disordered regions lie at residues M1–Y23 and E68–A87. The span at K7–T18 shows a compositional bias: basic and acidic residues. The 130-residue stretch at P12–L141 folds into the C2 domain. Positions N71–P84 are enriched in polar residues. Coiled coils occupy residues V414 to E561 and D672 to Q715. Residues R735–R775 are disordered.

In Rattus norvegicus (Rat), this protein is Coiled-coil domain-containing protein 33 (Ccdc33).